Here is a 321-residue protein sequence, read N- to C-terminus: Transaldolase (321 aa).

The Schiff-base intermediate with substrate role is filled by K132.

Belongs to the transaldolase family. Type 1 subfamily. As to quaternary structure, homodimer.

Its subcellular location is the cytoplasm. The catalysed reaction is D-sedoheptulose 7-phosphate + D-glyceraldehyde 3-phosphate = D-erythrose 4-phosphate + beta-D-fructose 6-phosphate. Its pathway is carbohydrate degradation; pentose phosphate pathway; D-glyceraldehyde 3-phosphate and beta-D-fructose 6-phosphate from D-ribose 5-phosphate and D-xylulose 5-phosphate (non-oxidative stage): step 2/3. In terms of biological role, transaldolase is important for the balance of metabolites in the pentose-phosphate pathway. The chain is Transaldolase from Rhizobium rhizogenes (strain K84 / ATCC BAA-868) (Agrobacterium radiobacter).